Consider the following 275-residue polypeptide: NAD(P)H dehydrogenase [quinone] 1 (275 aa).

Residues H13, 19–20, and Q68 each bind FAD; that span reads FN. The residue at position 83 (S83) is a Phosphoserine. FAD is bound at residue 105 to 108; it reads LQWF. 127 to 129 provides a ligand contact to substrate; the sequence is AYT. FAD contacts are provided by residues 149–152, Y157, and R202; that span reads TTGG. Residues 226–275 form an important for apoenzyme conformational stability region; the sequence is PSSLFDLNFQAGFLLKKEIEDEQKNNKYGLSVGHHLGKPIPTDNQIKARK. A Glycyl lysine isopeptide (Lys-Gly) (interchain with G-Cter in SUMO2) cross-link involves residue K252.

The protein belongs to the NAD(P)H dehydrogenase (quinone) family. In terms of assembly, homodimer. Interacts with PDLIM4 isoform 2; this interaction stabilizes PDLIM4 isoform 2 in response to oxidative stress and protects it from ubiquitin-independent degradation by the core 20S proteasome. Interacts with TP73 (via SAM domain); this interaction is NADH-dependent, stabilizes TP73 in response to oxidative stress and protects it from ubiquitin-independent degradation by the 20S proteasome. Interacts with TP53; this interaction is NADH-dependent, stabilizes TP53 in response to oxidative stress and protects it from ubiquitin-independent degradation by the 20S proteasome. It depends on FAD as a cofactor.

It localises to the cytoplasm. The protein localises to the cytosol. It catalyses the reaction a quinone + NADH + H(+) = a quinol + NAD(+). The enzyme catalyses a quinone + NADPH + H(+) = a quinol + NADP(+). The catalysed reaction is ubiquinone-10 + NADH + H(+) = ubiquinol-10 + NAD(+). It carries out the reaction menadione + NADH + H(+) = menadiol + NAD(+). In terms of biological role, flavin-containing quinone reductase that catalyzes two-electron reduction of quinones to hydroquinones using either NADH or NADPH as electron donors. In a ping-pong kinetic mechanism, the electrons are sequentially transferred from NAD(P)H to flavin cofactor and then from reduced flavin to the quinone, bypassing the formation of semiquinone and reactive oxygen species. Regulates cellular redox state primarily through quinone detoxification. Reduces components of plasma membrane redox system such as coenzyme Q and vitamin quinones, producing antioxidant hydroquinone forms. In the process may function as superoxide scavenger to prevent hydroquinone oxidation and facilitate excretion. Alternatively, can activate quinones and their derivatives by generating redox reactive hydroquinones with DNA cross-linking antitumor potential. Acts as a gatekeeper of the core 20S proteasome known to degrade proteins with unstructured regions. Upon oxidative stress, interacts with tumor suppressors TP53 and TP73 in a NADH-dependent way and inhibits their ubiquitin-independent degradation by the 20S proteasome. The polypeptide is NAD(P)H dehydrogenase [quinone] 1 (NQO1) (Cavia porcellus (Guinea pig)).